Here is a 267-residue protein sequence, read N- to C-terminus: MRRGDPPPRAFQAPVDVHASADGQVYMFRHRQEEPEASSEDEELNVMELRPRSRDSSSKEKEGVGEMLLLERDISHEDNLSKLALQYGCKVADIKRVNNLFQEQDMYALKSIKIPVRKHGLLTEAISELRTPQQRPSHDAAPSNSAMASVSGRPQVQEYTNYLKEVDNDIERLIQNTDNVEEVFSASSRVSRGWGWRSQRLRSNGADWGIQWWNAVIAMLLIGIVLPIFYVVYYKTKDSGESAVDNVGVNISVSTSNSTREYNGKSP.

Residues 1–211 (MRRGDPPPRA…RSNGADWGIQ (211 aa)) are Extracellular-facing. Residues 30–64 (HRQEEPEASSEDEELNVMELRPRSRDSSSKEKEGV) are disordered. A compositionally biased stretch (acidic residues) spans 35-45 (PEASSEDEELN). Residues 49 to 64 (LRPRSRDSSSKEKEGV) show a composition bias toward basic and acidic residues. One can recognise a LysM domain in the interval 70 to 114 (LERDISHEDNLSKLALQYGCKVADIKRVNNLFQEQDMYALKSIKI). Asn79 carries N-linked (GlcNAc...) asparagine glycosylation. Positions 130 to 152 (RTPQQRPSHDAAPSNSAMASVSG) are disordered. The segment covering 142–152 (PSNSAMASVSG) has biased composition (polar residues). Residues 212–232 (WWNAVIAMLLIGIVLPIFYVV) form a helical membrane-spanning segment. Residues 233–267 (YYKTKDSGESAVDNVGVNISVSTSNSTREYNGKSP) are Cytoplasmic-facing.

It localises to the membrane. This Danio rerio (Zebrafish) protein is LysM and putative peptidoglycan-binding domain-containing protein 4 (lysmd4).